Consider the following 548-residue polypeptide: Organic cation transporter protein (548 aa).

Topologically, residues 1–22 (MGYDDVITHLGEFGPYQKRIYY) are cytoplasmic. Residues 23–43 (LLCLPAIVCAFHKLAGVFLLA) traverse the membrane as a helical segment. Over 44-127 (KPDFRCALPY…TEWNLVCSRS (84 aa)) the chain is Extracellular. Asparagine 55, asparagine 67, asparagine 89, and asparagine 97 each carry an N-linked (GlcNAc...) asparagine glycan. Residues 128–148 (LLSATSDSLFMLGVLLGSLIF) form a helical membrane-spanning segment. The Cytoplasmic portion of the chain corresponds to 149 to 158 (GQMSDKLGRK). The helical transmembrane segment at 159–179 (PTFFASLVLQLIFGVLAAVAP) threads the bilayer. Residues 180–189 (EYFSYTISRM) lie on the Extracellular side of the membrane. The helical transmembrane segment at 190 to 210 (IVGATTSGVFLVAYVIALEMV) threads the bilayer. The Cytoplasmic portion of the chain corresponds to 211–219 (GSSYRLFAG). The helical transmembrane segment at 220-240 (VAMQMFFSVGFMLTAGFAYFI) threads the bilayer. The Extracellular segment spans residues 241–244 (HDWR). Residues 245-265 (WLQIAITLPGLLFLCYYWIIP) form a helical membrane-spanning segment. Over 266 to 337 (ESARWLLMKG…LLRYPNLRRK (72 aa)) the chain is Cytoplasmic. A helical transmembrane segment spans residues 338–358 (TLLIFFDWFVNSGVYYGLSWN). At 359 to 366 (TNNLGGNQ) the chain is on the extracellular side. The helical transmembrane segment at 367-387 (LVNFMISGAVEIPGYTLLLFT) threads the bilayer. Topologically, residues 388–395 (LNRWGRRS) are cytoplasmic. The helical transmembrane segment at 396-416 (ILCGTMMVAGISLLATIFVPS) threads the bilayer. Residues 417 to 419 (DMN) lie on the Extracellular side of the membrane. The helical transmembrane segment at 420 to 440 (WLIVACAMIGKLAITSSYGTI) threads the bilayer. Residues 441 to 453 (YIFSAEQFPTVVR) lie on the Cytoplasmic side of the membrane. Residues 454–474 (NVGLGASSMVARVGGILAPYL) traverse the membrane as a helical segment. Topologically, residues 475 to 482 (KLLGEIWR) are extracellular. Residues 483-503 (PLPLIICGALSLTAGLLSLLL) traverse the membrane as a helical segment. Over 504–548 (PETLNKPMPETIEDGENFGKKPAPQETAEEGGTQELSGMLNGKSG) the chain is Cytoplasmic. Positions 512 to 548 (PETIEDGENFGKKPAPQETAEEGGTQELSGMLNGKSG) are disordered.

Belongs to the major facilitator (TC 2.A.1) superfamily. Organic cation transporter (TC 2.A.1.19) family. Expressed in embryos and adults at low level. Expressed at higher level in third instar larvae.

It is found in the membrane. Probably transports organic cations. The chain is Organic cation transporter protein (Orct) from Drosophila melanogaster (Fruit fly).